Consider the following 222-residue polypeptide: Lipid A 4'-phosphatase (222 aa).

At 1 to 3 (MAR) the chain is on the cytoplasmic side. A helical membrane pass occupies residues 4–24 (FHIILGLVVCFFAWIFFLIFP). The Periplasmic portion of the chain corresponds to 25 to 58 (NLDIQFAGHFYNSSAHQFIGGYDGFLGFLHWFAR). Residues 59-79 (FFPIFFSIIVILFLLGSLFID) form a helical membrane-spanning segment. Topologically, residues 80-87 (KFKIKYRK) are cytoplasmic. Residues 88 to 108 (AIFFIAVCLWIGPGLVVNYVF) traverse the membrane as a helical segment. At 109–144 (KDHWGRPRPVMVEQFNGDKIFQPPFVISSQCDKNCS) the chain is on the periplasmic side. The chain crosses the membrane as a helical span at residues 145–165 (FVCGDASMGFWLFAFMPLLAT). Residues 166–169 (RKKK) are Cytoplasmic-facing. The helical transmembrane segment at 170–190 (LVAFIAAVVAGGGLGLMRMSQ) threads the bilayer. Residues 191 to 193 (GGH) lie on the Periplasmic side of the membrane. The helical transmembrane segment at 194-214 (FFSDVVFCGIFVYISTWVVYA) threads the bilayer. At 215 to 222 (LMYRKKEY) the chain is on the cytoplasmic side.

The protein belongs to the lipid A LpxF 4'-phosphatase family.

It is found in the cell inner membrane. The protein operates within bacterial outer membrane biogenesis; LPS lipid A biosynthesis. Its function is as follows. Removes the 4'-phosphate moiety from lipid IV(A) (a tetraacylated precursor of lipid A) and from pentaacylated lipid A, but not from hexaacylated lipid A (as is found in E.coli). Does not dephosphorylate phosphatidic acid, phosphatidylglycerophosphate, or the 1-phosphate group of lipid A and lipid A precursors. Its expression in E.coli confers resistance to the cationic antimicrobial peptide (CAMP) polymyxin B. Plays a critical role in the ability of the bacteria to avoid the host's innate immune system, especially the bactericidal action of CAMPs, although whether it is CAMP-sensitivity or increased sensitivity to the immune system is not clear. The protein is Lipid A 4'-phosphatase of Francisella tularensis subsp. novicida (strain U112).